The primary structure comprises 257 residues: MSFKVVIPARYASSRLPGKPLLDIAGKPMVVRVIERSLASGAAEVVVATDHERIQEAVSSYGYDVMMTSADHASGTDRIAEVVQQRGWEDDTIVVNVQGDEPLIDPRLIGEVAGNLSAHAEASMATACHVLHDTPSILNPNIVKVVLDQQGHALYFSRAPIPYPRDAFAANQDIPPGMPIYRHIGIYAYRAGFLRAYAALTPSAIEYFESLEQLRVLWHGYKISVEITEKAPASGVDTEADLAYVRSVVISGESKLL.

The protein belongs to the KdsB family.

It is found in the cytoplasm. The enzyme catalyses 3-deoxy-alpha-D-manno-oct-2-ulosonate + CTP = CMP-3-deoxy-beta-D-manno-octulosonate + diphosphate. It functions in the pathway nucleotide-sugar biosynthesis; CMP-3-deoxy-D-manno-octulosonate biosynthesis; CMP-3-deoxy-D-manno-octulosonate from 3-deoxy-D-manno-octulosonate and CTP: step 1/1. It participates in bacterial outer membrane biogenesis; lipopolysaccharide biosynthesis. In terms of biological role, activates KDO (a required 8-carbon sugar) for incorporation into bacterial lipopolysaccharide in Gram-negative bacteria. This is 3-deoxy-manno-octulosonate cytidylyltransferase from Methylobacillus flagellatus (strain ATCC 51484 / DSM 6875 / VKM B-1610 / KT).